The following is a 225-amino-acid chain: tRNA (guanine-N(7)-)-methyltransferase (225 aa).

The S-adenosyl-L-methionine site is built by Glu-56, Glu-81, Asp-108, and Asp-131. Asp-131 is an active-site residue. Substrate is bound by residues Lys-135, Asp-167, and 204–207; that span reads TKFE.

This sequence belongs to the class I-like SAM-binding methyltransferase superfamily. TrmB family.

The catalysed reaction is guanosine(46) in tRNA + S-adenosyl-L-methionine = N(7)-methylguanosine(46) in tRNA + S-adenosyl-L-homocysteine. The protein operates within tRNA modification; N(7)-methylguanine-tRNA biosynthesis. Functionally, catalyzes the formation of N(7)-methylguanine at position 46 (m7G46) in tRNA. This chain is tRNA (guanine-N(7)-)-methyltransferase, found in Legionella pneumophila (strain Corby).